Here is a 370-residue protein sequence, read N- to C-terminus: Serine/threonine-protein kinase SAPK5 (370 aa).

Residues 4–260 form the Protein kinase domain; that stretch reads YEPVREIGAG…MGEIKSHPWF (257 aa). Residues 10 to 18 and lysine 33 each bind ATP; that span reads IGAGNFGVA. Aspartate 123 serves as the catalytic Proton acceptor. The interval 312–370 is disordered; it reads EAQTVPKPDKPVSGYGWGTDDDDDDQQPAEEEDEEDDYDRTVREVHASVDLDMSNLQIS. Residues 330–349 show a composition bias toward acidic residues; sequence TDDDDDDQQPAEEEDEEDDY. A compositionally biased stretch (basic and acidic residues) spans 350–360; that stretch reads DRTVREVHASV.

This sequence belongs to the protein kinase superfamily. Ser/Thr protein kinase family. Post-translationally, may be phosphorylated. As to expression, expressed in leaf blades, leaf sheaths and roots. Expressed in shoots and roots of young seedlings.

The protein localises to the cytoplasm. Its subcellular location is the nucleus. It catalyses the reaction L-seryl-[protein] + ATP = O-phospho-L-seryl-[protein] + ADP + H(+). It carries out the reaction L-threonyl-[protein] + ATP = O-phospho-L-threonyl-[protein] + ADP + H(+). With respect to regulation, activated by hyperosmotic stress. Its function is as follows. May play a role in signal transduction of hyperosmotic response. The sequence is that of Serine/threonine-protein kinase SAPK5 (SAPK5) from Oryza sativa subsp. japonica (Rice).